The chain runs to 737 residues: Glycogen [starch] synthase, muscle (737 aa).

Phosphoserine; by AMPK and PKA is present on Ser-8. Phosphoserine is present on Ser-11. Residue Lys-39 coordinates UDP. UDP-alpha-D-glucose contacts are provided by His-205 and Arg-211. Positions 291, 292, 294, 297, and 301 each coordinate alpha-D-glucose 6-phosphate. Arg-331 is a binding site for UDP. Arg-331 serves as a coordination point for UDP-alpha-D-glucose. Residue Ser-412 is modified to Phosphoserine. His-501 serves as a coordination point for alpha-D-glucose 6-phosphate. UDP-alpha-D-glucose is bound by residues Glu-510, Trp-512, and Gly-513. Position 515 (Thr-515) interacts with UDP. 2 residues coordinate alpha-D-glucose 6-phosphate: Arg-582 and Arg-586. The tract at residues 634–737 (YRYPRPASVP…PTSSLGEERN (104 aa)) is disordered. Residue Ser-641 is modified to Phosphoserine; by DYRK2, GSK3-alpha, GSK3-beta and PASK. 2 positions are modified to phosphoserine; by GSK3-alpha and GSK3-beta: Ser-645 and Ser-649. Ser-652 is subject to Phosphoserine. At Ser-653 the chain carries Phosphoserine; by GSK3-alpha and GSK3-beta. Ser-657 carries the phosphoserine; by CK2 modification. Positions 658–681 (EDEEDPRNGPLEEDSERYDEDEEA) are enriched in acidic residues. Ser-672 bears the Phosphoserine mark. Basic and acidic residues predominate over residues 682-695 (AKDRRNIRAPEWPR). Residue Ser-698 is modified to Phosphoserine. Polar residues predominate over residues 698–714 (SCTSSTSGSKRNSVDTA). Thr-700 carries the phosphothreonine modification. Phosphoserine is present on Ser-710. A compositionally biased stretch (low complexity) spans 715-737 (TSSSLSTPSEPLSPTSSLGEERN). Thr-721 is modified (phosphothreonine). Phosphoserine occurs at positions 727 and 731.

This sequence belongs to the glycosyltransferase 3 family. As to quaternary structure, part of the GYS1-GYG1 complex, a heterooctamer composed of a tetramer of GYS1 and 2 dimers of GYG1, where each GYS1 protomer binds to one GYG1 subunit (via GYG1 C-terminus); the GYS1 tetramer may dissociate from GYG1 dimers to continue glycogen polymerization on its own. Post-translationally, phosphorylation at Ser-8 by AMPK inactivates the enzyme activity. Primed phosphorylation at Ser-657 (site 5) by CSNK2A1 and CSNK2A2 is required for inhibitory phosphorylation at Ser-641 (site 3a), Ser-645 (site 3b), Ser-649 (site 3c) and Ser-653 (site 4) by GSK3A an GSK3B. Phosphorylated at Ser-641 by PASK, leading to inactivation; phosphorylation by PASK is inhibited by glycogen. Phosphorylated at Ser-641 by DYRK2, leading to inactivation. Dephosphorylation at Ser-641 and Ser-645 by PP1 activates the enzyme.

The catalysed reaction is [(1-&gt;4)-alpha-D-glucosyl](n) + UDP-alpha-D-glucose = [(1-&gt;4)-alpha-D-glucosyl](n+1) + UDP + H(+). It functions in the pathway glycan biosynthesis; glycogen biosynthesis. Its activity is regulated as follows. Allosteric activation by glucose-6-phosphate. Phosphorylation reduces the activity towards UDP-glucose. When in the non-phosphorylated state, glycogen synthase does not require glucose-6-phosphate as an allosteric activator; when phosphorylated it does. Its function is as follows. Glycogen synthase participates in the glycogen biosynthetic process along with glycogenin and glycogen branching enzyme. Extends the primer composed of a few glucose units formed by glycogenin by adding new glucose units to it. In this context, glycogen synthase transfers the glycosyl residue from UDP-Glc to the non-reducing end of alpha-1,4-glucan. This chain is Glycogen [starch] synthase, muscle (GYS1), found in Macaca mulatta (Rhesus macaque).